Here is a 137-residue protein sequence, read N- to C-terminus: Small ribosomal subunit protein bS6 (137 aa).

Residues 96–137 form a disordered region; that stretch reads ITEASPMAKAKDERDTRRSSEERAPRAEATEEAEESAENTAE. The segment covering 104–124 has biased composition (basic and acidic residues); it reads KAKDERDTRRSSEERAPRAEA. Acidic residues predominate over residues 125–137; that stretch reads TEEAEESAENTAE.

This sequence belongs to the bacterial ribosomal protein bS6 family.

Its function is as follows. Binds together with bS18 to 16S ribosomal RNA. The sequence is that of Small ribosomal subunit protein bS6 from Shewanella pealeana (strain ATCC 700345 / ANG-SQ1).